The sequence spans 329 residues: GTPase Obg (329 aa).

The Obg domain maps to 1 to 159 (MQFIDQARIT…WLLHLELKLL (159 aa)). Residues 160–328 (AEVGIIGLPN…LLNKIWSKLE (169 aa)) enclose the OBG-type G domain. ATP is bound by residues 166-173 (GLPNAGKS), 191-195 (FTTLI), 213-216 (DIPG), 280-283 (NKKE), and 309-311 (SAI). The Mg(2+) site is built by Ser-173 and Thr-193.

Belongs to the TRAFAC class OBG-HflX-like GTPase superfamily. OBG GTPase family. In terms of assembly, monomer. Requires Mg(2+) as cofactor.

The protein resides in the cytoplasm. Functionally, an essential GTPase which binds GTP, GDP and possibly (p)ppGpp with moderate affinity, with high nucleotide exchange rates and a fairly low GTP hydrolysis rate. Plays a role in control of the cell cycle, stress response, ribosome biogenesis and in those bacteria that undergo differentiation, in morphogenesis control. The sequence is that of GTPase Obg from Prochlorococcus marinus (strain SARG / CCMP1375 / SS120).